The sequence spans 157 residues: Crossover junction endodeoxyribonuclease RuvC (157 aa).

Residues D7, E67, and D139 contribute to the active site. Mg(2+) is bound by residues D7, E67, and D139.

Belongs to the RuvC family. In terms of assembly, homodimer which binds Holliday junction (HJ) DNA. The HJ becomes 2-fold symmetrical on binding to RuvC with unstacked arms; it has a different conformation from HJ DNA in complex with RuvA. In the full resolvosome a probable DNA-RuvA(4)-RuvB(12)-RuvC(2) complex forms which resolves the HJ. Mg(2+) serves as cofactor.

The protein resides in the cytoplasm. It catalyses the reaction Endonucleolytic cleavage at a junction such as a reciprocal single-stranded crossover between two homologous DNA duplexes (Holliday junction).. Functionally, the RuvA-RuvB-RuvC complex processes Holliday junction (HJ) DNA during genetic recombination and DNA repair. Endonuclease that resolves HJ intermediates. Cleaves cruciform DNA by making single-stranded nicks across the HJ at symmetrical positions within the homologous arms, yielding a 5'-phosphate and a 3'-hydroxyl group; requires a central core of homology in the junction. The consensus cleavage sequence is 5'-(A/T)TT(C/G)-3'. Cleavage occurs on the 3'-side of the TT dinucleotide at the point of strand exchange. HJ branch migration catalyzed by RuvA-RuvB allows RuvC to scan DNA until it finds its consensus sequence, where it cleaves and resolves the cruciform DNA. This chain is Crossover junction endodeoxyribonuclease RuvC, found in Prochlorococcus marinus (strain AS9601).